Here is a 457-residue protein sequence, read N- to C-terminus: NADH-quinone oxidoreductase subunit D (457 aa).

Positions 1–23 (MSTHTETPVDGSAETITGAQPYE) are disordered.

The protein belongs to the complex I 49 kDa subunit family. In terms of assembly, NDH-1 is composed of 14 different subunits. Subunits NuoB, C, D, E, F, and G constitute the peripheral sector of the complex.

Its subcellular location is the cell membrane. It catalyses the reaction a quinone + NADH + 5 H(+)(in) = a quinol + NAD(+) + 4 H(+)(out). Functionally, NDH-1 shuttles electrons from NADH, via FMN and iron-sulfur (Fe-S) centers, to quinones in the respiratory chain. The immediate electron acceptor for the enzyme in this species is believed to be a menaquinone. Couples the redox reaction to proton translocation (for every two electrons transferred, four hydrogen ions are translocated across the cytoplasmic membrane), and thus conserves the redox energy in a proton gradient. This Parafrankia sp. (strain EAN1pec) protein is NADH-quinone oxidoreductase subunit D.